A 273-amino-acid polypeptide reads, in one-letter code: Bis(5'-nucleosyl)-tetraphosphatase, symmetrical (273 aa).

It belongs to the Ap4A hydrolase family.

It carries out the reaction P(1),P(4)-bis(5'-adenosyl) tetraphosphate + H2O = 2 ADP + 2 H(+). Its function is as follows. Hydrolyzes diadenosine 5',5'''-P1,P4-tetraphosphate to yield ADP. This Aliivibrio salmonicida (strain LFI1238) (Vibrio salmonicida (strain LFI1238)) protein is Bis(5'-nucleosyl)-tetraphosphatase, symmetrical.